A 721-amino-acid chain; its full sequence is DNA ligase (721 aa).

The span at 1–19 (MTAKKQGAQASASAPSGDS) shows a compositional bias: low complexity. Positions 1–23 (MTAKKQGAQASASAPSGDSPAER) are disordered. NAD(+) is bound by residues 48–52 (DADYD), 97–98 (SL), and Glu162. The active-site N6-AMP-lysine intermediate is the Lys164. The NAD(+) site is built by Arg185, Glu221, Lys338, and Lys362. Residues Cys456, Cys459, Cys474, and Cys480 each contribute to the Zn(2+) site. Residues 639 to 721 (RAPLPLAGKT…LKLLAEVGAA (83 aa)) enclose the BRCT domain.

The protein belongs to the NAD-dependent DNA ligase family. LigA subfamily. Mg(2+) is required as a cofactor. Requires Mn(2+) as cofactor.

It carries out the reaction NAD(+) + (deoxyribonucleotide)n-3'-hydroxyl + 5'-phospho-(deoxyribonucleotide)m = (deoxyribonucleotide)n+m + AMP + beta-nicotinamide D-nucleotide.. In terms of biological role, DNA ligase that catalyzes the formation of phosphodiester linkages between 5'-phosphoryl and 3'-hydroxyl groups in double-stranded DNA using NAD as a coenzyme and as the energy source for the reaction. It is essential for DNA replication and repair of damaged DNA. This is DNA ligase from Cupriavidus metallidurans (strain ATCC 43123 / DSM 2839 / NBRC 102507 / CH34) (Ralstonia metallidurans).